The following is a 276-amino-acid chain: MSWWQVISLAVVQGLTEFLPVSSSGHLAVVSRVFFSDDAGASFTAVTQLGTEAAVLVYFARDIVRILRAWFDGLVVKSHRNADYRLGWYVIIGTIPICVLGLLFKDEIRSGVRNLWVVATALVVFSGVIALAEYLGRQSRHVEQLTWRDGLVVGVAQTLALVPGVSRSGSTISAGLFLGLDRELAARFGFLLAIPAVFASGLFSLPDAFHPVTEGMSATGPQLLVATLIAFVVGLAAVSWFLRFLLRHSMYWFVGYRVVVGVVVLILLATGTVAAT.

A run of 5 helical transmembrane segments spans residues 84 to 104 (YRLG…GLLF), 115 to 135 (LWVV…AEYL), 188 to 208 (FGFL…LPDA), 222 to 242 (QLLV…SWFL), and 250 to 270 (MYWF…LLAT).

This sequence belongs to the UppP family.

Its subcellular location is the cell membrane. It carries out the reaction di-trans,octa-cis-undecaprenyl diphosphate + H2O = di-trans,octa-cis-undecaprenyl phosphate + phosphate + H(+). Catalyzes the dephosphorylation of undecaprenyl diphosphate (UPP). Confers resistance to bacitracin. The polypeptide is Undecaprenyl-diphosphatase (Mycobacterium ulcerans (strain Agy99)).